Here is a 241-residue protein sequence, read N- to C-terminus: Probable 2-phosphosulfolactate phosphatase (241 aa).

This sequence belongs to the ComB family. The cofactor is Mg(2+).

It carries out the reaction (2R)-O-phospho-3-sulfolactate + H2O = (2R)-3-sulfolactate + phosphate. This is Probable 2-phosphosulfolactate phosphatase from Deinococcus geothermalis (strain DSM 11300 / CIP 105573 / AG-3a).